The chain runs to 207 residues: MSDATLAADPPRLYLASASPRRRELLLQIGLTHTVLRVPAPPGEDEPQHPGEAACDYVRRTARDKAERGQAWLHSQQLPDLPLLAADTTVILDGIVLGKPADRADALRMLAALSGREHEVHAAVALCHQGRLYEDVSITRVRMRALEQAELQRYCDSGEPYGKAGAYGIQGLAGAFVSHIAGSYTGVMGLPIYETAALLRSAGIAVP.

Residue Asp-87 is the Proton acceptor of the active site.

It belongs to the Maf family. YhdE subfamily. It depends on a divalent metal cation as a cofactor.

It localises to the cytoplasm. It catalyses the reaction dTTP + H2O = dTMP + diphosphate + H(+). The enzyme catalyses UTP + H2O = UMP + diphosphate + H(+). Functionally, nucleoside triphosphate pyrophosphatase that hydrolyzes dTTP and UTP. May have a dual role in cell division arrest and in preventing the incorporation of modified nucleotides into cellular nucleic acids. The sequence is that of dTTP/UTP pyrophosphatase from Bordetella pertussis (strain Tohama I / ATCC BAA-589 / NCTC 13251).